We begin with the raw amino-acid sequence, 253 residues long: MVSSFTSAPRSGFYYFAQGWKLVSQPGIRRFVILPLLVNILLMGGAFWWLFTQLDVWIPTFMSYVPDWLQWLSYLLWPLAVISVLLVFGYFFSTIANWIAAPFNGLLAEQLEARLTGATPPDTGIFGIMKDVPRIMKREWQKFVWYLPRAIVLLILYFIPGIGQTVAPVLWFLFSAWMLAIQYCDYPFDNHKVPFKEMRTALRTRKITNMQFGALTSLFTMIPLLNLFIMPVAVCGATAMWVDCYRDKHAMWR.

4 helical membrane passes run 31–51 (FVIL…WWLF), 75–95 (LLWP…FSTI), 151–171 (IVLL…PVLW), and 222–242 (IPLL…AMWV).

This sequence belongs to the CysZ family.

Its subcellular location is the cell inner membrane. High affinity, high specificity proton-dependent sulfate transporter, which mediates sulfate uptake. Provides the sulfur source for the cysteine synthesis pathway. This Shigella flexneri serotype 5b (strain 8401) protein is Sulfate transporter CysZ.